Reading from the N-terminus, the 523-residue chain is 2-oxopropyl-CoM reductase, carboxylating (523 aa).

An FAD-binding site is contributed by 53–54 (AA). Arginine 56 provides a ligand contact to 2-oxopropyl-coenzyme M. Residue serine 81 coordinates FAD. Cysteine 82 serves as a coordination point for 2-oxopropyl-coenzyme M. An intrachain disulfide couples cysteine 82 to cysteine 87. Position 158 (alanine 158) interacts with FAD. Residues 222 to 225 (GSKT) and 245 to 246 (RT) each bind NADP(+). Aspartate 353 is an FAD binding site. Position 360 (glutamate 360) interacts with NADP(+). Residue methionine 361 participates in FAD binding. Arginine 365 provides a ligand contact to 2-oxopropyl-coenzyme M. Phenylalanine 501 contributes to the FAD binding site.

Belongs to the class-I pyridine nucleotide-disulfide oxidoreductase family. In terms of assembly, homodimer. Component II of the aliphatic epoxide carboxylation complex together with components I, III and IV. FAD serves as cofactor.

It catalyses the reaction coenzyme M + acetoacetate + NADP(+) = 2-oxopropyl-coenzyme M + CO2 + NADPH. The protein operates within alkene metabolism; propylene degradation. With respect to regulation, inhibited (at 40%) by the coenzyme M analog 2-bromoethanesulfonate (BES). BES is a time-dependent inactivator of dithiothreitol-reduced 2-KPCC, where the redox active cysteines are in the free thiol forms. BES does not inactivate air-oxidized 2-KPCC, where the redox active cysteine pair is in the disulfide form. BES specifically alkylates the interchange thiol that facilitates thioether bond cleavage and enolacetone formation during catalysis. Functionally, involved in aliphatic epoxide carboxylation. Catalyzes the reductive cleavage of the thioether bond of 2-oxopropyl-coenzyme M (2-KPC), and the subsequent carboxylation of the ketopropyl cleavage product, yielding the products acetoacetate and free coenzyme M. The chain is 2-oxopropyl-CoM reductase, carboxylating from Xanthobacter autotrophicus (strain ATCC BAA-1158 / Py2).